Here is a 505-residue protein sequence, read N- to C-terminus: Chemotaxis regulatory protein ChePep (505 aa).

Disordered regions lie at residues 154–403 (EPNN…EDIP) and 420–465 (EAVA…SSPL). 5 stretches are compositionally biased toward basic and acidic residues: residues 172-263 (EEVK…EKTQ), 289-311 (ENKEKTQESAEIPQDKEIQEVVT), 337-346 (QAHELEKQEI), 359-373 (QDKEVQELEIPKEET), and 386-398 (PQEKETQEDHYES). The segment covering 440–451 (TETSKNENNTET) has biased composition (low complexity).

In terms of assembly, interacts with CheZ; the interaction is essential for each other polar localization.

The protein localises to the cytoplasm. Its function is as follows. Plays an essential role in chemotaxis. Regulates flagellar rotation through the formation of a complex with chemotaxis protein CheZ. Plays a major role in colonization of the stomach. The chain is Chemotaxis regulatory protein ChePep from Helicobacter pylori (strain ATCC 700392 / 26695) (Campylobacter pylori).